A 118-amino-acid chain; its full sequence is Ribonuclease P protein component (118 aa).

The protein belongs to the RnpA family. In terms of assembly, consists of a catalytic RNA component (M1 or rnpB) and a protein subunit.

It carries out the reaction Endonucleolytic cleavage of RNA, removing 5'-extranucleotides from tRNA precursor.. RNaseP catalyzes the removal of the 5'-leader sequence from pre-tRNA to produce the mature 5'-terminus. It can also cleave other RNA substrates such as 4.5S RNA. The protein component plays an auxiliary but essential role in vivo by binding to the 5'-leader sequence and broadening the substrate specificity of the ribozyme. In Shewanella putrefaciens (strain CN-32 / ATCC BAA-453), this protein is Ribonuclease P protein component.